The primary structure comprises 237 residues: Phosphoribosylaminoimidazole-succinocarboxamide synthase (237 aa).

Belongs to the SAICAR synthetase family.

The catalysed reaction is 5-amino-1-(5-phospho-D-ribosyl)imidazole-4-carboxylate + L-aspartate + ATP = (2S)-2-[5-amino-1-(5-phospho-beta-D-ribosyl)imidazole-4-carboxamido]succinate + ADP + phosphate + 2 H(+). The protein operates within purine metabolism; IMP biosynthesis via de novo pathway; 5-amino-1-(5-phospho-D-ribosyl)imidazole-4-carboxamide from 5-amino-1-(5-phospho-D-ribosyl)imidazole-4-carboxylate: step 1/2. The polypeptide is Phosphoribosylaminoimidazole-succinocarboxamide synthase (Deinococcus radiodurans (strain ATCC 13939 / DSM 20539 / JCM 16871 / CCUG 27074 / LMG 4051 / NBRC 15346 / NCIMB 9279 / VKM B-1422 / R1)).